Consider the following 355-residue polypeptide: Replication-associated protein (355 aa).

Residues 11–114 (SHRNANTFLT…PLAVFERGTF (104 aa)) form the CRESS-DNA virus Rep endonuclease domain. An RCR-1 motif is present at residues 18–21 (FLTY). A divalent metal cation-binding residues include Glu52, His60, and His62. The short motif at 60 to 62 (HLH) is the RCR-2 element. Tyr100 serves as the catalytic For DNA cleavage activity. Residues 100–103 (YILK) carry the RCR-3 motif. A divalent metal cation is bound at residue Glu104. An oligomerization region spans residues 175–187 (SANKLFPEIQEEF). 229-236 (GPTRTGKS) serves as a coordination point for ATP. Positions 252-270 (VDWSSYNEDAIYNIVDDIP) are transactivation. A Nuclear localization signal motif is present at residues 292–303 (KYGKKKKVQKKS).

It belongs to the geminiviridae Rep protein family. In terms of assembly, homooligomer. Rep binds to repeated DNA motifs (iterons). Forms the O-complex, which is a Rep-DNA complex involved in the initiation of RCR. Part of the C- and V-complexes which are RepA-Rep-DNA complexes involved in the c-sense and v-sense transcription. It depends on Mg(2+) as a cofactor. The cofactor is Mn(2+).

It localises to the host nucleus. Its function is as follows. Essential for the replication of viral ssDNA. The closed circular ssDNA genome is first converted to a superhelical dsDNA. Rep binds a specific region at the genome origin of replication. It introduces an endonucleolytic nick within the conserved sequence 5'-TAATATTAC-3' in the intergenic region of the genome present in all geminiviruses, thereby initiating the rolling circle replication (RCR). Following cleavage, binds covalently to the 5'-phosphate of DNA as a tyrosyl ester. The cleavage gives rise to a free 3'-OH that serves as a primer for the cellular DNA polymerase. The polymerase synthesizes the (+) strand DNA by rolling circle mechanism. After one round of replication, a Rep-catalyzed nucleotidyl transfer reaction releases a circular single-stranded virus genome, thereby terminating the replication. Displays origin-specific DNA cleavage, nucleotidyl transferase, ATPase and helicase activities. Acts as an inhibitor of C-sense gene transcription. The protein is Replication-associated protein of Maize streak virus genotype A (isolate South Africa) (MSV).